Reading from the N-terminus, the 570-residue chain is uncharacterized protein (570 aa).

The segment covering 1 to 15 (MTESIISSRTASISS) has biased composition (low complexity). Residues 1-34 (MTESIISSRTASISSKEGYEIRQGSTDSSSLDLE) are disordered. Ser-14 carries the post-translational modification Phosphoserine. The next 12 membrane-spanning stretches (helical) occupy residues 96–116 (WKLY…LFIG), 141–161 (NLNT…HYIM), 163–183 (TFPL…IVFL), 198–218 (FFLG…MGMF), 229–249 (PVFW…AYGL), 261–281 (LFMI…FFYY), 328–348 (PITW…NLAY), 369–389 (VALA…MYLI), 397–417 (AMFW…LPWS), 423–443 (LATM…LGWT), 457–477 (GLMF…LWQS), and 485–505 (PAWI…YLVA).

This sequence belongs to the major facilitator superfamily. Allantoate permease family.

The protein resides in the endoplasmic reticulum. Its subcellular location is the membrane. This is an uncharacterized protein from Schizosaccharomyces pombe (strain 972 / ATCC 24843) (Fission yeast).